The sequence spans 505 residues: Maturase K (505 aa).

The protein belongs to the intron maturase 2 family. MatK subfamily.

It is found in the plastid. It localises to the chloroplast. Functionally, usually encoded in the trnK tRNA gene intron. Probably assists in splicing its own and other chloroplast group II introns. The sequence is that of Maturase K from Spinacia oleracea (Spinach).